The chain runs to 523 residues: Cyclic di-GMP binding protein BcsE (523 aa).

It belongs to the BcsE family.

Functionally, required for cellulose biosynthesis. May have protease activity, but BcsA is not targeted. Binds bis-(3'-5') cyclic diguanylic acid (c-di-GMP). The chain is Cyclic di-GMP binding protein BcsE from Salmonella typhimurium (strain LT2 / SGSC1412 / ATCC 700720).